The sequence spans 277 residues: 5'-nucleotidase SurE (277 aa).

A divalent metal cation contacts are provided by Asp-14, Asp-15, Ser-46, and Asn-104.

Belongs to the SurE nucleotidase family. A divalent metal cation is required as a cofactor.

The protein localises to the cytoplasm. The catalysed reaction is a ribonucleoside 5'-phosphate + H2O = a ribonucleoside + phosphate. Its function is as follows. Nucleotidase that shows phosphatase activity on nucleoside 5'-monophosphates. The chain is 5'-nucleotidase SurE from Picosynechococcus sp. (strain ATCC 27264 / PCC 7002 / PR-6) (Agmenellum quadruplicatum).